The chain runs to 68 residues: DNA-directed RNA polymerase subunit omega (68 aa).

Belongs to the RNA polymerase subunit omega family. In terms of assembly, the RNAP catalytic core consists of 2 alpha, 1 beta, 1 beta' and 1 omega subunit. When a sigma factor is associated with the core the holoenzyme is formed, which can initiate transcription.

The catalysed reaction is RNA(n) + a ribonucleoside 5'-triphosphate = RNA(n+1) + diphosphate. Its function is as follows. Promotes RNA polymerase assembly. Latches the N- and C-terminal regions of the beta' subunit thereby facilitating its interaction with the beta and alpha subunits. The polypeptide is DNA-directed RNA polymerase subunit omega (Listeria monocytogenes serotype 4b (strain CLIP80459)).